The sequence spans 478 residues: D(1B) dopamine receptor (478 aa).

Over 1 to 38 (MLPPGRNGTAHRARLGLQRQLAQVDAPGGSAAPLGPAQ) the chain is Extracellular. An N-linked (GlcNAc...) asparagine glycan is attached at Asn-7. The helical transmembrane segment at 39–64 (VVTAGLLTLLIVWTLLGNVLVCAAIV) threads the bilayer. Residues 65-75 (RSRHLRAKMTN) lie on the Cytoplasmic side of the membrane. A helical transmembrane segment spans residues 76 to 102 (IFIVSLAVSDLFVALLVMPWKAVAEVA). Topologically, residues 103–111 (GYWPFGAFC) are extracellular. The cysteines at positions 111 and 211 are disulfide-linked. Residues 112–134 (DIWVAFDIMCSTASILNLCIISV) form a helical membrane-spanning segment. Residues 135–153 (DRYWAISRPFRYERKMTQR) are Cytoplasmic-facing. The chain crosses the membrane as a helical span at residues 154–179 (VALVMVALAWTLSILISFIPVQLNWH). Over 180–215 (RDKAGSQGREGLLSNETPWEEGWELDGRTENCDSSL) the chain is Extracellular. Residues 216–240 (NRTYAISSSLISFYIPVAIMIVTYT) traverse the membrane as a helical segment. Over 241–289 (RIYRIAQVQIRRISSLERAAEHAQSCRSRGACEPDPSLRASIKKETKVF) the chain is Cytoplasmic. A helical transmembrane segment spans residues 290–317 (KTLSVIMGVFVCCWLPFFILNCMVPFCS). The Extracellular segment spans residues 318-335 (SGDAQGPRTGFPCVSETT). The helical transmembrane segment at 336-357 (FDIFVWFGWANSSLNPIIYAFN) threads the bilayer. Residues 358-478 (ADFRKVFAQL…LTPNCFHKTA (121 aa)) are Cytoplasmic-facing. Cys-370 is lipidated: S-palmitoyl cysteine. Residues 416 to 446 (GDREVGEEEEAEEEGPFDHMSQISPTTPDGD) form a disordered region. Positions 420–430 (VGEEEEAEEEG) are enriched in acidic residues.

Belongs to the G-protein coupled receptor 1 family.

The protein resides in the cell membrane. Dopamine receptor whose activity is mediated by G proteins which activate adenylyl cyclase. This is D(1B) dopamine receptor (Drd5) from Mus musculus (Mouse).